The sequence spans 244 residues: WUSCHEL-related homeobox 3 (244 aa).

The segment at residues 4 to 68 is a DNA-binding region (homeobox; WUS-type); that stretch reads VASTRWCPTP…NHKARDRQKL (65 aa).

The protein belongs to the WUS homeobox family. Expressed in aerial parts of seedlings, inflorescences and flowers at low level. Expressed in a restricted number of L1 cells at the lateral regions of flower primordia.

The protein localises to the nucleus. Probable transcription factor required to initiate organ founder cells in a lateral domain of shoot meristems. Involved in the lateral sepal axis-dependent development of flowers, probably by regulating the proliferation of L1 cells at the lateral region of flower primordia. Required for the formation of the margin cells of the first and second whorl organs. This chain is WUSCHEL-related homeobox 3 (WOX3), found in Arabidopsis thaliana (Mouse-ear cress).